Here is a 495-residue protein sequence, read N- to C-terminus: MQGTKIRLLAGSLLMLASAGYVQADALQPDPAWQQGTLANGLQWQVLATPQRPSDRIEVRLQVNTGSLTESTQQSGFSHAIPRIALTQSGGLDAAQARSLWQQGFDPKRPMPPVIVSYDSTLYNLSLPNNRNDLLKEALTYLANVSGKLTITPETVNHALSSEDMVATWPADTKEGWWRYRLKGSALLGHDPAEPLKQPVDAAKIQAFYEKWYTPDAMTLIVVGNIDARSVAEQINKTFGTLKGKRETPAPVPTLSPLRAESVSIMTDAVRQDRLSIMWDTPWQPIRESAALLRYWQADLAREALFWHIQQELTKNNAKDIGLGFDCRVLFLRAQCAINIESPNDKLNTNLSLVANELAKVRDKGLSEEEFTALVAQKNLELQKLFATYARTDTDILTGQRMRSLQNQVVDIAPEQYQKLRQNFLNSLTVDMLNQNLRQQLSQEMALILLQPQGEPEFNMKALKATWDEIMVPTTAAAVEADEAHPEVTETPAAQ.

A signal peptide spans Met-1–Ala-24.

Belongs to the peptidase M16 family.

The protein localises to the periplasm. This Salmonella typhimurium (strain LT2 / SGSC1412 / ATCC 700720) protein is Protein YhjJ (yhjJ).